The following is a 684-amino-acid chain: DNA ligase (684 aa).

Residues 34–38 (DYDFD), 83–84 (SL), and glutamate 117 contribute to the NAD(+) site. The active-site N6-AMP-lysine intermediate is lysine 119. NAD(+) contacts are provided by arginine 140, glutamate 188, lysine 301, and lysine 325. Cysteine 419, cysteine 422, cysteine 437, and cysteine 443 together coordinate Zn(2+). Positions 602–684 (DAPQTFAGMT…QTMLAAESGD (83 aa)) constitute a BRCT domain.

This sequence belongs to the NAD-dependent DNA ligase family. LigA subfamily. Mg(2+) serves as cofactor. Mn(2+) is required as a cofactor.

It catalyses the reaction NAD(+) + (deoxyribonucleotide)n-3'-hydroxyl + 5'-phospho-(deoxyribonucleotide)m = (deoxyribonucleotide)n+m + AMP + beta-nicotinamide D-nucleotide.. Functionally, DNA ligase that catalyzes the formation of phosphodiester linkages between 5'-phosphoryl and 3'-hydroxyl groups in double-stranded DNA using NAD as a coenzyme and as the energy source for the reaction. It is essential for DNA replication and repair of damaged DNA. The sequence is that of DNA ligase from Chloroherpeton thalassium (strain ATCC 35110 / GB-78).